Reading from the N-terminus, the 305-residue chain is Spermatogenesis-associated protein 4 (305 aa).

A Calponin-homology (CH) domain is found at 49–155 (SRLSRSVLRW…EEVYTLLTHR (107 aa)).

As to expression, highly expressed in testis, the expression is observed precisely in seminiferous tubules.

It localises to the nucleus. Its function is as follows. May play a role in apoptosis regulation. In Homo sapiens (Human), this protein is Spermatogenesis-associated protein 4 (SPATA4).